The sequence spans 302 residues: Haloalkane dehalogenase (302 aa).

Residues 48–150 (PVLLMHGEPS…AGLVIANTGL (103 aa)) enclose the AB hydrolase-1 domain. The Nucleophile role is filled by Asp-123. The active-site Proton donor is the Asp-249. Residue His-278 is the Proton acceptor of the active site.

Belongs to the haloalkane dehalogenase family. Type 1 subfamily. Monomer.

The catalysed reaction is 1-haloalkane + H2O = a halide anion + a primary alcohol + H(+). Catalyzes hydrolytic cleavage of carbon-halogen bonds in halogenated aliphatic compounds, leading to the formation of the corresponding primary alcohols, halide ions and protons. This Caulobacter sp. (strain K31) protein is Haloalkane dehalogenase.